We begin with the raw amino-acid sequence, 360 residues long: (+)-6a-hydroxymaackiain 3-O-methyltransferase 2 (360 aa).

S-adenosyl-L-methionine contacts are provided by residues 202–205 (VAGG), D226, 226–227 (DQ), 246–247 (DM), and K260. H264 (proton acceptor) is an active-site residue.

This sequence belongs to the class I-like SAM-binding methyltransferase superfamily. Cation-independent O-methyltransferase family. COMT subfamily.

The catalysed reaction is (+)-6a-hydroxymaackiain + S-adenosyl-L-methionine = (+)-pisatin + S-adenosyl-L-homocysteine + H(+). In terms of biological role, 3-O-methyltransferase involved in the phytoalexin pisatin biosynthesis. Can use (+)-6a-hydroxymaackiain, (+)-maackiain and with a lower activity (+)-medicarpin and 2,7,4'-trihydroxyisoflavanone as substrates, but not (-)-6a-hydroxymaackiain, daidzein, formononetin or isoliquiritigenin. The polypeptide is (+)-6a-hydroxymaackiain 3-O-methyltransferase 2 (HMM2) (Pisum sativum (Garden pea)).